The sequence spans 49 residues: Large ribosomal subunit protein bL33A (49 aa).

Belongs to the bacterial ribosomal protein bL33 family.

The polypeptide is Large ribosomal subunit protein bL33A (Geobacillus thermodenitrificans (strain NG80-2)).